A 636-amino-acid chain; its full sequence is Amylosucrase (636 aa).

Substrate-binding residues include aspartate 152, histidine 195, glutamine 262, and arginine 292. Aspartate 294 acts as the Nucleophile in catalysis. Glutamate 336 acts as the Proton donor in catalysis. The substrate site is built by histidine 400, aspartate 401, and arginine 517.

The protein belongs to the glycosyl hydrolase 13 family. Monomer.

The protein localises to the secreted. The catalysed reaction is [(1-&gt;4)-alpha-D-glucosyl](n) + sucrose = [(1-&gt;4)-alpha-D-glucosyl](n+1) + D-fructose. Its activity is regulated as follows. Amylosucrase favors hydrolysis at low sucrose concentrations, and polymerization at high sucrose concentrations. Competitively inhibited by fructose. In terms of biological role, catalyzes the synthesis of alpha-glucan from sucrose. Catalyzes, in addition, sucrose hydrolysis, maltose and maltotriose synthesis by successive transfers of the glucosyl moiety of sucrose onto the released glucose, and finally turanose and trehalulose synthesis, these two sucrose isomers being obtained by glucosyl transfer onto fructose. The polypeptide is Amylosucrase (ams) (Neisseria polysaccharea).